The primary structure comprises 366 residues: Mannonate dehydratase (366 aa).

This sequence belongs to the mannonate dehydratase family. It depends on Fe(2+) as a cofactor. The cofactor is Mn(2+).

It carries out the reaction D-mannonate = 2-dehydro-3-deoxy-D-gluconate + H2O. The protein operates within carbohydrate metabolism; pentose and glucuronate interconversion. In terms of biological role, catalyzes the dehydration of D-mannonate. This Streptococcus suis (strain 98HAH33) protein is Mannonate dehydratase.